A 149-amino-acid chain; its full sequence is Transcriptional regulator MraZ (149 aa).

SpoVT-AbrB domains lie at 7–54 (KYIN…GIAH) and 83–126 (AVQL…QPQN).

This sequence belongs to the MraZ family. Forms oligomers.

It is found in the cytoplasm. The protein resides in the nucleoid. The chain is Transcriptional regulator MraZ from Rickettsia typhi (strain ATCC VR-144 / Wilmington).